The following is a 435-amino-acid chain: tRNA-2-methylthio-N(6)-dimethylallyladenosine synthase (435 aa).

Positions 2–117 constitute an MTTase N-terminal domain; that stretch reads KKASIITYGC…IPQAIEKIEN (116 aa). [4Fe-4S] cluster is bound by residues C11, C47, C80, C154, C158, and C161. Residues 140–370 form the Radical SAM core domain; that stretch reads FGSDQTASIS…MEVQNKCSFY (231 aa). One can recognise a TRAM domain in the interval 373–435; sequence SKYKGRIVKV…KTWTLYGEIV (63 aa).

The protein belongs to the methylthiotransferase family. MiaB subfamily. Monomer. Requires [4Fe-4S] cluster as cofactor.

It localises to the cytoplasm. The catalysed reaction is N(6)-dimethylallyladenosine(37) in tRNA + (sulfur carrier)-SH + AH2 + 2 S-adenosyl-L-methionine = 2-methylsulfanyl-N(6)-dimethylallyladenosine(37) in tRNA + (sulfur carrier)-H + 5'-deoxyadenosine + L-methionine + A + S-adenosyl-L-homocysteine + 2 H(+). Catalyzes the methylthiolation of N6-(dimethylallyl)adenosine (i(6)A), leading to the formation of 2-methylthio-N6-(dimethylallyl)adenosine (ms(2)i(6)A) at position 37 in tRNAs that read codons beginning with uridine. This Fusobacterium nucleatum subsp. nucleatum (strain ATCC 25586 / DSM 15643 / BCRC 10681 / CIP 101130 / JCM 8532 / KCTC 2640 / LMG 13131 / VPI 4355) protein is tRNA-2-methylthio-N(6)-dimethylallyladenosine synthase.